Here is a 110-residue protein sequence, read N- to C-terminus: UPF0060 membrane protein Bamb_1160 (110 aa).

The next 4 helical transmembrane spans lie at Ala-9–Leu-29, Pro-34–Leu-54, Tyr-66–Leu-86, and Arg-88–Pro-108.

Belongs to the UPF0060 family.

It localises to the cell inner membrane. This chain is UPF0060 membrane protein Bamb_1160, found in Burkholderia ambifaria (strain ATCC BAA-244 / DSM 16087 / CCUG 44356 / LMG 19182 / AMMD) (Burkholderia cepacia (strain AMMD)).